The sequence spans 258 residues: MDQLKKPHILLCNDDGIEGEGLHALAASMKKIGNITVVAPAEPHSGMSHAMTLGTPLRIKKYYKNNRFFGYTVSGTPVDCVKVALSQILPSKPDLLVSGINYGSNTATNTLYSGTVAAALEGAIQGITSLAFSLATYENADFSYAAKFARKLSKKVLTEGLPPDTILSVNIPNIPESEIQGILVTEQGRSRWEEDAIERHDVYGNPYYWLNGTLMLLDTSLQHDEYAVRKHYVAVTPISCDFTNRDFMGSLEQWNLKK.

A divalent metal cation contacts are provided by Asp14, Asp15, Ser45, and Asn101.

Belongs to the SurE nucleotidase family. The cofactor is a divalent metal cation.

It localises to the cytoplasm. It carries out the reaction a ribonucleoside 5'-phosphate + H2O = a ribonucleoside + phosphate. Functionally, nucleotidase that shows phosphatase activity on nucleoside 5'-monophosphates. The chain is 5'-nucleotidase SurE from Chlorobium phaeobacteroides (strain DSM 266 / SMG 266 / 2430).